The chain runs to 344 residues: Anthranilate phosphoribosyltransferase (344 aa).

Residues Gly85, 88 to 89, Thr93, 95 to 98, 113 to 121, and Ser125 each bind 5-phospho-alpha-D-ribose 1-diphosphate; these read GD, NIST, and KHGGRSVSS. Gly85 is an anthranilate binding site. Ser97 lines the Mg(2+) pocket. Arg171 contributes to the anthranilate binding site. Mg(2+) contacts are provided by Asp230 and Glu231.

This sequence belongs to the anthranilate phosphoribosyltransferase family. In terms of assembly, homodimer. Requires Mg(2+) as cofactor.

The enzyme catalyses N-(5-phospho-beta-D-ribosyl)anthranilate + diphosphate = 5-phospho-alpha-D-ribose 1-diphosphate + anthranilate. Its pathway is amino-acid biosynthesis; L-tryptophan biosynthesis; L-tryptophan from chorismate: step 2/5. Catalyzes the transfer of the phosphoribosyl group of 5-phosphorylribose-1-pyrophosphate (PRPP) to anthranilate to yield N-(5'-phosphoribosyl)-anthranilate (PRA). In Delftia acidovorans (strain DSM 14801 / SPH-1), this protein is Anthranilate phosphoribosyltransferase.